The chain runs to 732 residues: uncharacterized protein (732 aa).

2 disordered regions span residues T38 to K90 and E226 to Q629. Residues Q47 to Q56 are compositionally biased toward low complexity. The span at P57–L76 shows a compositional bias: polar residues. Composition is skewed to low complexity over residues T77–N89, T231–A247, and T254–S318. Residues K327–T338 show a composition bias toward basic residues. 3 stretches are compositionally biased toward low complexity: residues K339–T383, K401–K421, and S487–K523. Acidic residues predominate over residues A553–N566. Composition is skewed to low complexity over residues S567–N577 and D593–L609. Residues S610–N621 show a composition bias toward acidic residues.

This is an uncharacterized protein from Dictyostelium discoideum (Social amoeba).